The chain runs to 294 residues: Shikimate dehydrogenase (NADP(+)) (294 aa).

Residues 22-24 and S69 contribute to the shikimate site; that span reads SLS. Residue K73 is the Proton acceptor of the active site. The shikimate site is built by N94 and D111. NADP(+)-binding positions include 135 to 139 and L236; that span reads GAGGA. Residue Y238 coordinates shikimate. G260 is a binding site for NADP(+).

It belongs to the shikimate dehydrogenase family. As to quaternary structure, homodimer.

It catalyses the reaction shikimate + NADP(+) = 3-dehydroshikimate + NADPH + H(+). Its pathway is metabolic intermediate biosynthesis; chorismate biosynthesis; chorismate from D-erythrose 4-phosphate and phosphoenolpyruvate: step 4/7. In terms of biological role, involved in the biosynthesis of the chorismate, which leads to the biosynthesis of aromatic amino acids. Catalyzes the reversible NADPH linked reduction of 3-dehydroshikimate (DHSA) to yield shikimate (SA). The sequence is that of Shikimate dehydrogenase (NADP(+)) from Streptococcus equi subsp. zooepidemicus (strain H70).